The sequence spans 421 residues: 4-hydroxy-3-methylbut-2-en-1-yl diphosphate synthase (flavodoxin) (421 aa).

[4Fe-4S] cluster is bound by residues Cys-311, Cys-314, Cys-357, and Glu-364.

Belongs to the IspG family. The cofactor is [4Fe-4S] cluster.

The catalysed reaction is (2E)-4-hydroxy-3-methylbut-2-enyl diphosphate + oxidized [flavodoxin] + H2O + 2 H(+) = 2-C-methyl-D-erythritol 2,4-cyclic diphosphate + reduced [flavodoxin]. The protein operates within isoprenoid biosynthesis; isopentenyl diphosphate biosynthesis via DXP pathway; isopentenyl diphosphate from 1-deoxy-D-xylulose 5-phosphate: step 5/6. Its function is as follows. Converts 2C-methyl-D-erythritol 2,4-cyclodiphosphate (ME-2,4cPP) into 1-hydroxy-2-methyl-2-(E)-butenyl 4-diphosphate. This chain is 4-hydroxy-3-methylbut-2-en-1-yl diphosphate synthase (flavodoxin), found in Stenotrophomonas maltophilia (strain K279a).